The primary structure comprises 371 residues: Anhydro-N-acetylmuramic acid kinase (371 aa).

12–20 (GTVLDGNID) is an ATP binding site.

This sequence belongs to the anhydro-N-acetylmuramic acid kinase family.

The catalysed reaction is 1,6-anhydro-N-acetyl-beta-muramate + ATP + H2O = N-acetyl-D-muramate 6-phosphate + ADP + H(+). Its pathway is amino-sugar metabolism; 1,6-anhydro-N-acetylmuramate degradation. It functions in the pathway cell wall biogenesis; peptidoglycan recycling. Functionally, catalyzes the specific phosphorylation of 1,6-anhydro-N-acetylmuramic acid (anhMurNAc) with the simultaneous cleavage of the 1,6-anhydro ring, generating MurNAc-6-P. Is required for the utilization of anhMurNAc either imported from the medium or derived from its own cell wall murein, and thus plays a role in cell wall recycling. The protein is Anhydro-N-acetylmuramic acid kinase of Mesorhizobium japonicum (strain LMG 29417 / CECT 9101 / MAFF 303099) (Mesorhizobium loti (strain MAFF 303099)).